We begin with the raw amino-acid sequence, 69 residues long: Putative membrane protein insertion efficiency factor (69 aa).

This sequence belongs to the UPF0161 family.

The protein resides in the cell inner membrane. Could be involved in insertion of integral membrane proteins into the membrane. The chain is Putative membrane protein insertion efficiency factor from Magnetococcus marinus (strain ATCC BAA-1437 / JCM 17883 / MC-1).